Here is a 461-residue protein sequence, read N- to C-terminus: Porin AaxA (461 aa).

A signal peptide spans 1 to 22 (MSFRSILLTALLSLSFTNTMQA).

Belongs to the OprB family.

The protein localises to the cell outer membrane. In terms of biological role, facilitates L-arginine uptake, as part of the AaxABC system. The arginine uptake by the bacterium in the macrophage may be a virulence factor against the host innate immune response. The chain is Porin AaxA (aaxA) from Chlamydia muridarum (strain MoPn / Nigg).